A 238-amino-acid chain; its full sequence is Doublecortin domain-containing protein (238 aa).

The partial p25alpha domain stretch occupies residues 82–112 (VFERLNDKQFYTGVQKTKFMELLKNNKNKSS). Positions 151 to 232 (KTIFLFNNEK…GDPPAPIRNL (82 aa)) constitute a Doublecortin domain.

As to quaternary structure, interacts with alpha-tubulin 1 and beta-tubulin; the interaction stabilizes microtubule assembly.

The protein resides in the cytoplasm. Its subcellular location is the cytoskeleton. Its function is as follows. Involved in the stabilization of microtubules. Probably by controlling microtubules stabilization, plays a role in invasion, microneme secretion and parasite growth in host erythrocytes. The chain is Doublecortin domain-containing protein from Plasmodium falciparum (isolate 3D7).